The chain runs to 431 residues: UDP-N-acetylmuramate--L-alanine ligase (431 aa).

Gly108–Thr114 is a binding site for ATP.

The protein belongs to the MurCDEF family.

The protein localises to the cytoplasm. The catalysed reaction is UDP-N-acetyl-alpha-D-muramate + L-alanine + ATP = UDP-N-acetyl-alpha-D-muramoyl-L-alanine + ADP + phosphate + H(+). Its pathway is cell wall biogenesis; peptidoglycan biosynthesis. Functionally, cell wall formation. This chain is UDP-N-acetylmuramate--L-alanine ligase, found in Campylobacter jejuni subsp. jejuni serotype O:6 (strain 81116 / NCTC 11828).